Consider the following 55-residue polypeptide: MPKNNTNENFQSGAGLIRYFNEEEIKGPALDPKLIIYIGIAMAVIVELAKIFWPV.

At 1 to 31 (MPKNNTNENFQSGAGLIRYFNEEEIKGPALD) the chain is on the cytoplasmic side. The chain crosses the membrane as a helical span at residues 32-51 (PKLIIYIGIAMAVIVELAKI). Over 52–55 (FWPV) the chain is Extracellular.

The protein belongs to the SEC61-beta family. In terms of assembly, component of the protein translocase complex. Heterotrimer consisting of alpha (SecY), beta (SecG) and gamma (SecE) subunits. Can form oligomers of the heterotrimer.

The protein resides in the cell membrane. Functionally, involved in protein export. The function of the beta subunit is unknown, but it may be involved in stabilization of the trimeric complex. The polypeptide is Preprotein translocase subunit SecG (Picrophilus torridus (strain ATCC 700027 / DSM 9790 / JCM 10055 / NBRC 100828 / KAW 2/3)).